We begin with the raw amino-acid sequence, 356 residues long: Protein pelota homolog (356 aa).

Belongs to the eukaryotic release factor 1 family. Pelota subfamily. As to quaternary structure, monomer. Requires a divalent metal cation as cofactor.

It localises to the cytoplasm. Functionally, may function in recognizing stalled ribosomes, interact with stem-loop structures in stalled mRNA molecules, and effect endonucleolytic cleavage of the mRNA. May play a role in the release non-functional ribosomes and degradation of damaged mRNAs. Has endoribonuclease activity. This chain is Protein pelota homolog, found in Staphylothermus marinus (strain ATCC 43588 / DSM 3639 / JCM 9404 / F1).